Here is a 309-residue protein sequence, read N- to C-terminus: Bombesin receptor-activated protein C6orf89 homolog (309 aa).

Over Met1–Arg59 the chain is Cytoplasmic. The helical transmembrane segment at Ala60–Tyr80 threads the bilayer. The Extracellular portion of the chain corresponds to Pro81 to Leu309.

As to quaternary structure, homodimer.

The protein localises to the golgi apparatus membrane. It localises to the cytoplasm. Its function is as follows. Exhibits histone deacetylase (HDAC) enhancer properties. May play a role in progression through the cell cycle. The protein is Bombesin receptor-activated protein C6orf89 homolog of Danio rerio (Zebrafish).